Here is a 696-residue protein sequence, read N- to C-terminus: GPI mannosyltransferase 4 (696 aa).

Transmembrane regions (helical) follow at residues 100 to 120, 125 to 142, 149 to 169, 185 to 205, 227 to 247, and 338 to 358; these read WQLELLGTYAYVVFPRLIYTL, NDYCLFRICRLYGLRFEI, SSWILLVFGTRTFSNSLEMAM, NTVVYKKEFLEEKYDKAESIS, AMSTICVAGVFNRPTFLLFGA, and YVHLMVNMPMLFNVLALASLG.

The protein belongs to the glycosyltransferase 22 family. PIGZ subfamily.

Its subcellular location is the endoplasmic reticulum membrane. The protein operates within glycolipid biosynthesis; glycosylphosphatidylinositol-anchor biosynthesis. In terms of biological role, mannosyltransferase involved in glycosylphosphatidylinositol-anchor biosynthesis. Transfers a fourth mannose to some trimannosyl-GPIs during GPI precursor assembly. The polypeptide is GPI mannosyltransferase 4 (Drosophila melanogaster (Fruit fly)).